Here is a 261-residue protein sequence, read N- to C-terminus: CD40 ligand (261 aa).

At 1–22 (MVETYHQPAPRSAATGLPVSMK) the chain is on the cytoplasmic side. A helical; Signal-anchor for type II membrane protein membrane pass occupies residues 23–43 (IFMYLLTVFLITQMIGSALFA). The Extracellular portion of the chain corresponds to 44–261 (VYLHRRLDKI…GFTSFGLLKL (218 aa)). The THD domain occupies 122 to 261 (IAAHVISEAS…GFTSFGLLKL (140 aa)). C178 and C218 are joined by a disulfide. N-linked (GlcNAc...) asparagine glycosylation is present at N240.

It belongs to the tumor necrosis factor family. In terms of assembly, homotrimer. Interacts with CD28. CD40 ligand, soluble form: Exists as either a monomer or a homotrimer. Forms a ternary complex between CD40 and integrins for CD40-CD40LG signaling. In terms of processing, the soluble form derives from the membrane form by proteolytic processing.

It is found in the cell membrane. It localises to the cell surface. The protein resides in the secreted. Functionally, cytokine that acts as a ligand to CD40/TNFRSF5. Costimulates T-cell proliferation and cytokine production. Its cross-linking on T-cells generates a costimulatory signal which enhances the production of IL4 and IL10 in conjunction with the TCR/CD3 ligation and CD28 costimulation. Induces the activation of NF-kappa-B. Induces the activation of kinases MAPK8 and PAK2 in T-cells. Mediates B-cell proliferation in the absence of co-stimulus as well as IgE production in the presence of IL4. Involved in immunoglobulin class switching. Its function is as follows. Acts as a ligand for integrins, specifically ITGA5:ITGB1 and ITGAV:ITGB3; both integrins and the CD40 receptor are required for activation of CD40-CD40LG signaling, which have cell-type dependent effects, such as B-cell activation, NF-kappa-B signaling and anti-apoptotic signaling. The chain is CD40 ligand (CD40LG) from Aotus trivirgatus (Three-striped night monkey).